A 513-amino-acid chain; its full sequence is ATP synthase subunit alpha (513 aa).

Residue 172–179 (GDRQTGKT) participates in ATP binding.

Belongs to the ATPase alpha/beta chains family. In terms of assembly, F-type ATPases have 2 components, CF(1) - the catalytic core - and CF(0) - the membrane proton channel. CF(1) has five subunits: alpha(3), beta(3), gamma(1), delta(1), epsilon(1). CF(0) has three main subunits: a(1), b(2) and c(9-12). The alpha and beta chains form an alternating ring which encloses part of the gamma chain. CF(1) is attached to CF(0) by a central stalk formed by the gamma and epsilon chains, while a peripheral stalk is formed by the delta and b chains.

Its subcellular location is the cell inner membrane. The catalysed reaction is ATP + H2O + 4 H(+)(in) = ADP + phosphate + 5 H(+)(out). Its function is as follows. Produces ATP from ADP in the presence of a proton gradient across the membrane. The alpha chain is a regulatory subunit. The sequence is that of ATP synthase subunit alpha from Gluconacetobacter diazotrophicus (strain ATCC 49037 / DSM 5601 / CCUG 37298 / CIP 103539 / LMG 7603 / PAl5).